A 185-amino-acid chain; its full sequence is Putative 3-methyladenine DNA glycosylase (185 aa).

It belongs to the DNA glycosylase MPG family.

The sequence is that of Putative 3-methyladenine DNA glycosylase from Rhizobium meliloti (strain 1021) (Ensifer meliloti).